A 500-amino-acid polypeptide reads, in one-letter code: L-arabinose isomerase (500 aa).

Mn(2+) contacts are provided by Glu306, Glu333, His350, and His450.

The protein belongs to the arabinose isomerase family. Homohexamer. Mn(2+) serves as cofactor.

It carries out the reaction beta-L-arabinopyranose = L-ribulose. The protein operates within carbohydrate degradation; L-arabinose degradation via L-ribulose; D-xylulose 5-phosphate from L-arabinose (bacterial route): step 1/3. Functionally, catalyzes the conversion of L-arabinose to L-ribulose. The sequence is that of L-arabinose isomerase from Shigella boydii serotype 18 (strain CDC 3083-94 / BS512).